The chain runs to 543 residues: Cytochrome P450 307a1 (543 aa).

A Phosphoserine modification is found at serine 219. The segment at 440–460 (FLEPSKEQSPKNSKGSDSGIE) is disordered. Over residues 449–460 (PKNSKGSDSGIE) the composition is skewed to polar residues. Cysteine 485 provides a ligand contact to heme.

It belongs to the cytochrome P450 family. Requires heme as cofactor.

Its subcellular location is the endoplasmic reticulum membrane. The protein resides in the microsome membrane. Required for correct development of the embryonic midline glial cells which are necessary for the formation of distinct segmental commissures. This Drosophila melanogaster (Fruit fly) protein is Cytochrome P450 307a1 (spo).